Here is a 148-residue protein sequence, read N- to C-terminus: SsrA-binding protein (148 aa).

The protein belongs to the SmpB family.

It localises to the cytoplasm. In terms of biological role, required for rescue of stalled ribosomes mediated by trans-translation. Binds to transfer-messenger RNA (tmRNA), required for stable association of tmRNA with ribosomes. tmRNA and SmpB together mimic tRNA shape, replacing the anticodon stem-loop with SmpB. tmRNA is encoded by the ssrA gene; the 2 termini fold to resemble tRNA(Ala) and it encodes a 'tag peptide', a short internal open reading frame. During trans-translation Ala-aminoacylated tmRNA acts like a tRNA, entering the A-site of stalled ribosomes, displacing the stalled mRNA. The ribosome then switches to translate the ORF on the tmRNA; the nascent peptide is terminated with the 'tag peptide' encoded by the tmRNA and targeted for degradation. The ribosome is freed to recommence translation, which seems to be the essential function of trans-translation. This chain is SsrA-binding protein, found in Burkholderia ambifaria (strain ATCC BAA-244 / DSM 16087 / CCUG 44356 / LMG 19182 / AMMD) (Burkholderia cepacia (strain AMMD)).